Reading from the N-terminus, the 164-residue chain is I-Kappa-B like protein F1 (164 aa).

ANK repeat units lie at residues 57–89 (HGRQ…NINA), 94–124 (TGNT…DLGA), and 128–157 (QQET…AYNN).

Belongs to the polydnaviridae I-Kappa-B-like protein family.

Functionally, suppresses the host immune response through NF-kappa-B inactivation. Possesses ankyrin repeat domains required for NF-kappa-B binding but lacks the regulatory regions required for dissociation from NF-kappa-B and degradation. Therefore, prevents host NF-kappa-B release and subsequent activation. The sequence is that of I-Kappa-B like protein F1 (F2) from Microplitis demolitor bracovirus (isolate Webb) (MdBV).